Consider the following 145-residue polypeptide: Protein SprT-like (145 aa).

One can recognise a SprT-like domain in the interval 5–141 (NYVKQVSVED…CGRCMGKLRL (137 aa)). Histidine 64 serves as a coordination point for Zn(2+). Glutamate 65 is a catalytic residue. Histidine 68 lines the Zn(2+) pocket.

The protein belongs to the SprT family. The cofactor is Zn(2+).

The protein localises to the cytoplasm. The protein is Protein SprT-like of Streptococcus sanguinis (strain SK36).